The primary structure comprises 365 residues: MTAISSPINLFEYEQLAKTHLSQMAFDYYISGAGDEITLQENRAVFERIKLRPRMLVDVSQINLTTSVLGQPLQLPLLIAPMAFQCLAHTEGELATAMAAASAGTGMVLSTLSTKSLEEVAEVGSKFSPSLQWFQLYIHKDRGLTRALVERAYAAGYKALCLTVDAPVLGQRERDRRNEFVLPPGLHLANLTTISGLNIPHAPGESGLFTYFAQQLNPALTWDDLEWLQSLSPLPLVLKGILRGDDAARAVEYGAKAIVVSNHGGRQLDGAIASLDALPEIVAAVNGKAEVLLDGGIRRGTDIIKALAIGAQAVLIGRPVLWGLAVGGQAGVSHVISLLQKELNVAMALIGCSQLQDIDTSFLHL.

One can recognise an FMN hydroxy acid dehydrogenase domain in the interval 2-365; sequence TAISSPINLF…QDIDTSFLHL (364 aa). Pyruvate is bound at residue tyrosine 28. Residues 81-83, serine 110, and glutamine 135 contribute to the FMN site; that span reads PMA. Residue tyrosine 137 participates in pyruvate binding. An FMN-binding site is contributed by threonine 163. Arginine 172 lines the pyruvate pocket. 2 residues coordinate FMN: lysine 239 and serine 261. The pyruvate site is built by histidine 263 and arginine 266. The active-site Proton acceptor is the histidine 263. Residues 294 to 298 and arginine 318 each bind FMN; that span reads DGGIR.

Belongs to the FMN-dependent alpha-hydroxy acid dehydrogenase family. In terms of assembly, homotetramer. FMN is required as a cofactor.

The enzyme catalyses (S)-lactate + O2 = pyruvate + H2O2. It carries out the reaction glyoxylate + O2 + H2O = oxalate + H2O2 + H(+). Functionally, catalyzes the oxidation of (S)-lactate (L-lactate) to pyruvate, with a reduction of O2 to H2O2. In extant N2-fixing cyanobacteria such as Nostoc, this enzyme primarily serves as an O2-scavenging enzyme, protecting nitrogenase that is extremely sensitive to O2, and is therefore an essential partner in N2 fixation. Also shows clear oxidase activity with glyoxylate in vitro, and low activity with glycerate, hydroxypyruvate and glycolate. The very low glycolate oxidase activity indicates that this enzyme is unlikely to be involved in photorespiratory glycolate metabolism, a pathway that seems to exist in this cyanobacterium, but in which the oxidation of glycolate is taken over by glycolate dehydrogenase (GlcD). Is not able to use D-lactate as substrate and does not show any dehydrogenase activity with NAD(+) or NADP(+). The sequence is that of L-lactate oxidase from Nostoc sp. (strain PCC 7120 / SAG 25.82 / UTEX 2576).